We begin with the raw amino-acid sequence, 533 residues long: MSSKVEHPAGGYKKLFETVEELASPITAHVTGRIPVWLTGSLLRCGPGLFEVGSEQFYHLFDGQALLHKFDFKEGHVTYHRRFIRTDTYVRAMTEKRIVITEFGTFAFPDPCKNIFSRFLSYFQGLEVTDNTLVNVYPVGEDYYACTETNYITKVNPETLETIKKVDLCNYVSINGVTAHPLIENDGTVYNIGNCFGKHFSFAYNIVKIPPLQEDKEDPINKAKVVVQFPCSERFKPSYVHSFGLTPNYIVFVEQPVKINLFKFLSSWSIWGANYMDCFESHETMGVWMHVAEKLTGEYLNIKYRTSAFNLFHHINTYEDHGFLIVDLCCWKGFEFIYNYLYLANMRENWEEVKRNAEKAPQPEVRRYVLPLDIHKVDTGKNLVNLPYTTATAILRSDETIWLEPEVLFSGPRLAFEFPQINYKKFGGKDYTFAYGLGLNHFVPDRLSKLNVKTKEIWVWQEPDSYPSEPIFVSQPDAMEEDDGVVLSVIVNPGPGQKPAFLLILNAKDMSEIARAEVDINIPVTFHGMYKKA.

Serine 2 carries the post-translational modification N-acetylserine. Residue cysteine 112 is the site of S-palmitoyl cysteine; in membrane form attachment. Histidine 180 provides a ligand contact to Fe cation. A lipid anchor (S-palmitoyl cysteine; in membrane form) is attached at cysteine 231. The Fe cation site is built by histidine 241 and histidine 313. 2 S-palmitoyl cysteine; in membrane form lipidation sites follow: cysteine 329 and cysteine 330. Histidine 527 contributes to the Fe cation binding site.

Belongs to the carotenoid oxygenase family. Fe(2+) serves as cofactor. In terms of processing, palmitoylation by LRAT regulates ligand binding specificity; the palmitoylated form (membrane form) specifically binds all-trans-retinyl-palmitate, while the soluble unpalmitoylated form binds all-trans-retinol (vitamin A). In terms of tissue distribution, retinal pigment epithelium specific.

Its subcellular location is the cell membrane. It catalyses the reaction an all-trans-retinyl ester + H2O = 11-cis-retinol + a fatty acid + H(+). The enzyme catalyses lutein = (3R,3'S)-zeaxanthin. The catalysed reaction is all-trans-retinyl hexadecanoate + H2O = 11-cis-retinol + hexadecanoate + H(+). Critical isomerohydrolase in the retinoid cycle involved in regeneration of 11-cis-retinal, the chromophore of rod and cone opsins. Catalyzes the cleavage and isomerization of all-trans-retinyl fatty acid esters to 11-cis-retinol which is further oxidized by 11-cis retinol dehydrogenase to 11-cis-retinal for use as visual chromophore. Essential for the production of 11-cis retinal for both rod and cone photoreceptors. Also capable of catalyzing the isomerization of lutein to meso-zeaxanthin an eye-specific carotenoid. The soluble form binds vitamin A (all-trans-retinol), making it available for LRAT processing to all-trans-retinyl ester. The membrane form, palmitoylated by LRAT, binds all-trans-retinyl esters, making them available for IMH (isomerohydrolase) processing to all-cis-retinol. The soluble form is regenerated by transferring its palmitoyl groups onto 11-cis-retinol, a reaction catalyzed by LRAT. In Cynops pyrrhogaster (Japanese fire-bellied newt), this protein is Retinoid isomerohydrolase (RPE65).